A 252-amino-acid polypeptide reads, in one-letter code: Imidazole glycerol phosphate synthase subunit HisF (252 aa).

Active-site residues include Asp-11 and Asp-130.

It belongs to the HisA/HisF family. In terms of assembly, heterodimer of HisH and HisF.

It localises to the cytoplasm. It carries out the reaction 5-[(5-phospho-1-deoxy-D-ribulos-1-ylimino)methylamino]-1-(5-phospho-beta-D-ribosyl)imidazole-4-carboxamide + L-glutamine = D-erythro-1-(imidazol-4-yl)glycerol 3-phosphate + 5-amino-1-(5-phospho-beta-D-ribosyl)imidazole-4-carboxamide + L-glutamate + H(+). Its pathway is amino-acid biosynthesis; L-histidine biosynthesis; L-histidine from 5-phospho-alpha-D-ribose 1-diphosphate: step 5/9. IGPS catalyzes the conversion of PRFAR and glutamine to IGP, AICAR and glutamate. The HisF subunit catalyzes the cyclization activity that produces IGP and AICAR from PRFAR using the ammonia provided by the HisH subunit. The polypeptide is Imidazole glycerol phosphate synthase subunit HisF (Aromatoleum aromaticum (strain DSM 19018 / LMG 30748 / EbN1) (Azoarcus sp. (strain EbN1))).